Reading from the N-terminus, the 230-residue chain is Probable carboxylesterase Culp2 (230 aa).

The tat-type signal signal peptide spans 1 to 32 (MNDLLTRRLLTMGAAAAMLAAVLLLTPITVPA). A disulfide bridge links Cys-45 with Cys-112. The active-site Nucleophile is the Ser-123. Cys-185 and Cys-192 are joined by a disulfide. The active site involves Asp-189. His-207 functions as the Proton donor/acceptor in the catalytic mechanism.

It belongs to the cutinase family. Predicted to be exported by the Tat system. The position of the signal peptide cleavage has not been experimentally proven.

The protein resides in the secreted. It is found in the cell surface. This Mycobacterium bovis (strain ATCC BAA-935 / AF2122/97) protein is Probable carboxylesterase Culp2 (cut2).